The sequence spans 367 residues: Probable protein phosphatase 2C 57 (367 aa).

The segment at 1–29 (MEEHRLGGGGGGGGGGGRPPIPGAAGRKL) is disordered. Gly residues predominate over residues 7-18 (GGGGGGGGGGGR). Residues 67 to 331 (RSGGWADIGS…DNLSVVVICF (265 aa)) form the PPM-type phosphatase domain. Residues aspartate 111, glycine 112, aspartate 279, and aspartate 322 each contribute to the Mn(2+) site.

Belongs to the PP2C family. Mg(2+) serves as cofactor. Requires Mn(2+) as cofactor.

It carries out the reaction O-phospho-L-seryl-[protein] + H2O = L-seryl-[protein] + phosphate. It catalyses the reaction O-phospho-L-threonyl-[protein] + H2O = L-threonyl-[protein] + phosphate. This is Probable protein phosphatase 2C 57 from Oryza sativa subsp. japonica (Rice).